The following is a 58-amino-acid chain: Large ribosomal subunit protein uL30 (58 aa).

This sequence belongs to the universal ribosomal protein uL30 family. Part of the 50S ribosomal subunit.

The chain is Large ribosomal subunit protein uL30 from Porphyromonas gingivalis (strain ATCC 33277 / DSM 20709 / CIP 103683 / JCM 12257 / NCTC 11834 / 2561).